The sequence spans 180 residues: MFPMMTGFMNYGQQTVRAARYIGQSFMITLSHANRLPVTIQYPYEKSITSERFRGRIHFEFDKCIACEVCVRVCPIDLPVVDWRLETDIRKKRLLNYSIDFGICIFCGNCVEYCPTNCLSMTEEYELSTYDRHELNYNQIALGRLPMSVIGDYTIRTIMNSTQIKIATDNPLDSRTITNY.

4Fe-4S ferredoxin-type domains lie at 55–84 (GRIH…VDWR) and 95–124 (LNYS…MTEE). The [4Fe-4S] cluster site is built by Cys-64, Cys-67, Cys-70, Cys-74, Cys-104, Cys-107, Cys-110, and Cys-114.

The protein belongs to the complex I 23 kDa subunit family. As to quaternary structure, NDH is composed of at least 16 different subunits, 5 of which are encoded in the nucleus. Requires [4Fe-4S] cluster as cofactor.

The protein resides in the plastid. Its subcellular location is the chloroplast thylakoid membrane. The enzyme catalyses a plastoquinone + NADH + (n+1) H(+)(in) = a plastoquinol + NAD(+) + n H(+)(out). The catalysed reaction is a plastoquinone + NADPH + (n+1) H(+)(in) = a plastoquinol + NADP(+) + n H(+)(out). In terms of biological role, NDH shuttles electrons from NAD(P)H:plastoquinone, via FMN and iron-sulfur (Fe-S) centers, to quinones in the photosynthetic chain and possibly in a chloroplast respiratory chain. The immediate electron acceptor for the enzyme in this species is believed to be plastoquinone. Couples the redox reaction to proton translocation, and thus conserves the redox energy in a proton gradient. This is NAD(P)H-quinone oxidoreductase subunit I, chloroplastic from Liriodendron tulipifera (Tuliptree).